Consider the following 436-residue polypeptide: Chromosomal replication initiator protein DnaA (436 aa).

A domain I, interacts with DnaA modulators region spans residues 1-69 (MLADEVLELL…AHLFEVKTGT (69 aa)). The segment at 69-99 (TKPNVEITTQTKLKSSKQNQVNIKQIKAQST) is domain II. The domain III, AAA+ region stretch occupies residues 100-314 (LLNPAYTFEN…SAIINLNAYA (215 aa)). ATP contacts are provided by Gly-144, Gly-146, Lys-147, and Thr-148. The tract at residues 315–436 (NLMRQEITLD…ELKNKILTKG (122 aa)) is domain IV, binds dsDNA.

It belongs to the DnaA family. As to quaternary structure, oligomerizes as a right-handed, spiral filament on DNA at oriC.

The protein localises to the cytoplasm. Its function is as follows. Plays an essential role in the initiation and regulation of chromosomal replication. ATP-DnaA binds to the origin of replication (oriC) to initiate formation of the DNA replication initiation complex once per cell cycle. Binds the DnaA box (a 9 base pair repeat at the origin) and separates the double-stranded (ds)DNA. Forms a right-handed helical filament on oriC DNA; dsDNA binds to the exterior of the filament while single-stranded (ss)DNA is stabiized in the filament's interior. The ATP-DnaA-oriC complex binds and stabilizes one strand of the AT-rich DNA unwinding element (DUE), permitting loading of DNA polymerase. After initiation quickly degrades to an ADP-DnaA complex that is not apt for DNA replication. Binds acidic phospholipids. In Campylobacter curvus (strain 525.92), this protein is Chromosomal replication initiator protein DnaA.